The primary structure comprises 319 residues: tRNA uridine(34) hydroxylase (319 aa).

The Rhodanese domain occupies 123 to 221 (GDPDVVVIDT…YLETIPPEQS (99 aa)). The active-site Cysteine persulfide intermediate is cysteine 181. Positions 298–319 (ARQQVHIGASPEPKAMPATAGR) are disordered.

Belongs to the TrhO family.

The enzyme catalyses uridine(34) in tRNA + AH2 + O2 = 5-hydroxyuridine(34) in tRNA + A + H2O. In terms of biological role, catalyzes oxygen-dependent 5-hydroxyuridine (ho5U) modification at position 34 in tRNAs. This chain is tRNA uridine(34) hydroxylase, found in Albidiferax ferrireducens (strain ATCC BAA-621 / DSM 15236 / T118) (Rhodoferax ferrireducens).